Reading from the N-terminus, the 190-residue chain is Crossover junction endodeoxyribonuclease RuvC (190 aa).

Residues D8, E67, and D139 contribute to the active site. 3 residues coordinate Mg(2+): D8, E67, and D139.

It belongs to the RuvC family. As to quaternary structure, homodimer which binds Holliday junction (HJ) DNA. The HJ becomes 2-fold symmetrical on binding to RuvC with unstacked arms; it has a different conformation from HJ DNA in complex with RuvA. In the full resolvosome a probable DNA-RuvA(4)-RuvB(12)-RuvC(2) complex forms which resolves the HJ. Requires Mg(2+) as cofactor.

Its subcellular location is the cytoplasm. It carries out the reaction Endonucleolytic cleavage at a junction such as a reciprocal single-stranded crossover between two homologous DNA duplexes (Holliday junction).. The RuvA-RuvB-RuvC complex processes Holliday junction (HJ) DNA during genetic recombination and DNA repair. Endonuclease that resolves HJ intermediates. Cleaves cruciform DNA by making single-stranded nicks across the HJ at symmetrical positions within the homologous arms, yielding a 5'-phosphate and a 3'-hydroxyl group; requires a central core of homology in the junction. The consensus cleavage sequence is 5'-(A/T)TT(C/G)-3'. Cleavage occurs on the 3'-side of the TT dinucleotide at the point of strand exchange. HJ branch migration catalyzed by RuvA-RuvB allows RuvC to scan DNA until it finds its consensus sequence, where it cleaves and resolves the cruciform DNA. This chain is Crossover junction endodeoxyribonuclease RuvC, found in Haemophilus influenzae (strain PittGG).